Here is a 360-residue protein sequence, read N- to C-terminus: Chorismate synthase (360 aa).

Residue arginine 47 coordinates NADP(+). Residues 124 to 126, glycine 286, 301 to 305, and arginine 327 each bind FMN; these read RAS and KPTAT.

The protein belongs to the chorismate synthase family. As to quaternary structure, homotetramer. The cofactor is FMNH2.

The catalysed reaction is 5-O-(1-carboxyvinyl)-3-phosphoshikimate = chorismate + phosphate. It functions in the pathway metabolic intermediate biosynthesis; chorismate biosynthesis; chorismate from D-erythrose 4-phosphate and phosphoenolpyruvate: step 7/7. In terms of biological role, catalyzes the anti-1,4-elimination of the C-3 phosphate and the C-6 proR hydrogen from 5-enolpyruvylshikimate-3-phosphate (EPSP) to yield chorismate, which is the branch point compound that serves as the starting substrate for the three terminal pathways of aromatic amino acid biosynthesis. This reaction introduces a second double bond into the aromatic ring system. This is Chorismate synthase from Synechococcus sp. (strain RCC307).